A 255-amino-acid chain; its full sequence is 4-hydroxy-tetrahydrodipicolinate reductase (255 aa).

Residues 13 to 18 (GCNGKM), 90 to 92 (CTT), and 114 to 117 (SANM) contribute to the NAD(+) site. H147 serves as the catalytic Proton donor/acceptor. (S)-2,3,4,5-tetrahydrodipicolinate is bound at residue H148. K151 functions as the Proton donor in the catalytic mechanism. Residue 157–158 (GT) coordinates (S)-2,3,4,5-tetrahydrodipicolinate.

This sequence belongs to the DapB family.

It localises to the cytoplasm. The catalysed reaction is (S)-2,3,4,5-tetrahydrodipicolinate + NAD(+) + H2O = (2S,4S)-4-hydroxy-2,3,4,5-tetrahydrodipicolinate + NADH + H(+). The enzyme catalyses (S)-2,3,4,5-tetrahydrodipicolinate + NADP(+) + H2O = (2S,4S)-4-hydroxy-2,3,4,5-tetrahydrodipicolinate + NADPH + H(+). The protein operates within amino-acid biosynthesis; L-lysine biosynthesis via DAP pathway; (S)-tetrahydrodipicolinate from L-aspartate: step 4/4. Its function is as follows. Catalyzes the conversion of 4-hydroxy-tetrahydrodipicolinate (HTPA) to tetrahydrodipicolinate. This Clostridium tetani (strain Massachusetts / E88) protein is 4-hydroxy-tetrahydrodipicolinate reductase.